An 81-amino-acid polypeptide reads, in one-letter code: Putative membrane protein insertion efficiency factor (81 aa).

The segment at 61-81 (NDGGFDPVPPAPSSRTSSIAE) is disordered.

The protein belongs to the UPF0161 family.

The protein localises to the cell inner membrane. Functionally, could be involved in insertion of integral membrane proteins into the membrane. The chain is Putative membrane protein insertion efficiency factor from Pseudomonas putida (strain ATCC 700007 / DSM 6899 / JCM 31910 / BCRC 17059 / LMG 24140 / F1).